The following is a 179-amino-acid chain: Large ribosomal subunit protein uL5 (179 aa).

The protein belongs to the universal ribosomal protein uL5 family. In terms of assembly, part of the 50S ribosomal subunit; part of the 5S rRNA/L5/L18/L25 subcomplex. Contacts the 5S rRNA and the P site tRNA. Forms a bridge to the 30S subunit in the 70S ribosome.

Functionally, this is one of the proteins that bind and probably mediate the attachment of the 5S RNA into the large ribosomal subunit, where it forms part of the central protuberance. In the 70S ribosome it contacts protein S13 of the 30S subunit (bridge B1b), connecting the 2 subunits; this bridge is implicated in subunit movement. Contacts the P site tRNA; the 5S rRNA and some of its associated proteins might help stabilize positioning of ribosome-bound tRNAs. The chain is Large ribosomal subunit protein uL5 from Bdellovibrio bacteriovorus (strain ATCC 15356 / DSM 50701 / NCIMB 9529 / HD100).